The chain runs to 490 residues: Cytochrome P450 2C28 (490 aa).

Residue serine 127 is modified to Phosphoserine. N6-acetyllysine occurs at positions 249 and 375. Cysteine 435 contacts heme.

It belongs to the cytochrome P450 family. Requires heme as cofactor. In terms of tissue distribution, liver.

The protein localises to the endoplasmic reticulum membrane. It is found in the microsome membrane. The catalysed reaction is an organic molecule + reduced [NADPH--hemoprotein reductase] + O2 = an alcohol + oxidized [NADPH--hemoprotein reductase] + H2O + H(+). Its function is as follows. Catalyzes the N-demethylation of aminopyrine and benzphetamine, but does not catalyze the hydroxylation of tolbutamide, testosterone, and progesterone. The chain is Cytochrome P450 2C28 (CYP2C28) from Mesocricetus auratus (Golden hamster).